The sequence spans 492 residues: MHSLDEPLDLKLSISKLRAAREKRERIGANARKRSVHHELMIRDDGTTVITPICSSPPPGFRYRDGDSPPFSSPPIVDLSLSPPSGTDSPSRSSLSPDRAAGDTLIDNPLLRCGGDSASSPFQFFLPLGSGLQLPPSMFMSPPKENRLSLEFTEQKQLVCQWAKCNRLFELLQELVDHVNDFHVKPEKDAGYCCHWEGCARRGRGFNARYKMLIHIRTHTNERPHCCPTCHKSFSRLENLKIHNRSHTGEKPYMCPYEGCNKRYSNSSDRFKHTRTHYVDKPYYCKMPGCQKRYTDPSSLRKHIKAHGHFISHQQRQLLKIHQPPKLPATGDSNYTNGTQLIIPNPAAIFGSQSLPIPLTPGPLDLSSLACSSVASALAGLPNPMLTLAGSPLNLAKGSLLSQAYSAAGLGLPLISLVTSGKVENEKRPKGQRGDSSERTDGSKLRPGSIEGLSLLPRGVLDLSPGVGSESLLPGWVVIPPGSVLLKPAVVN.

The interval 49-101 is disordered; it reads VITPICSSPPPGFRYRDGDSPPFSSPPIVDLSLSPPSGTDSPSRSSLSPDRAA. Residues 69 to 129 are transcription activation; it reads PPFSSPPIVD…SPFQFFLPLG (61 aa). A compositionally biased stretch (low complexity) spans 82–97; sequence SPPSGTDSPSRSSLSP. The interval 138-161 is transcription repression; that stretch reads MFMSPPKENRLSLEFTEQKQLVCQ. Residues 158–183 form a C2H2-type 1 zinc finger; sequence LVCQWAKCNRLFELLQELVDHVNDFH. Residues 192-219 form a C2H2-type 2; degenerate zinc finger; that stretch reads YCCHWEGCARRGRGFNARYKMLIHIRTH. C2H2-type zinc fingers lie at residues 225 to 247, 253 to 277, and 283 to 307; these read HCCP…NRSH, YMCP…TRTH, and YYCK…IKAH. Basic and acidic residues predominate over residues 423–444; that stretch reads VENEKRPKGQRGDSSERTDGSK. The tract at residues 423-450 is disordered; that stretch reads VENEKRPKGQRGDSSERTDGSKLRPGSI.

This sequence belongs to the GLI C2H2-type zinc-finger protein family.

The protein resides in the nucleus speckle. The protein localises to the cytoplasm. Functionally, can act either as a transcription repressor or as a transcription activator, depending on the cell context. May be involved in neuron differentiation. The polypeptide is Zinc finger protein GLIS2 (glis2) (Xenopus laevis (African clawed frog)).